The chain runs to 521 residues: NAD(P)H-quinone oxidoreductase subunit 2 (521 aa).

The next 14 helical transmembrane spans lie at 16 to 36, 43 to 63, 80 to 100, 110 to 130, 133 to 153, 168 to 188, 211 to 231, 245 to 265, 279 to 299, 307 to 327, 335 to 355, 379 to 399, 401 to 421, and 467 to 487; these read ILPE…DLIG, WLPY…YTAW, LSIV…LMSI, LAEF…LSGA, LVMI…MTGY, LLIG…LYGL, LGLA…ISAV, PTPV…ALAI, WHLI…VVAL, MLAY…TAGT, VFYL…VILF, LGLS…GFFG, IYLF…LALV, and VGLV…NPLF.

This sequence belongs to the complex I subunit 2 family. In terms of assembly, NDH-1 can be composed of about 15 different subunits; different subcomplexes with different compositions have been identified which probably have different functions.

It localises to the cellular thylakoid membrane. It catalyses the reaction a plastoquinone + NADH + (n+1) H(+)(in) = a plastoquinol + NAD(+) + n H(+)(out). It carries out the reaction a plastoquinone + NADPH + (n+1) H(+)(in) = a plastoquinol + NADP(+) + n H(+)(out). Its function is as follows. NDH-1 shuttles electrons from an unknown electron donor, via FMN and iron-sulfur (Fe-S) centers, to quinones in the respiratory and/or the photosynthetic chain. The immediate electron acceptor for the enzyme in this species is believed to be plastoquinone. Couples the redox reaction to proton translocation, and thus conserves the redox energy in a proton gradient. Cyanobacterial NDH-1 also plays a role in inorganic carbon-concentration. The polypeptide is NAD(P)H-quinone oxidoreductase subunit 2 (Crocosphaera subtropica (strain ATCC 51142 / BH68) (Cyanothece sp. (strain ATCC 51142))).